We begin with the raw amino-acid sequence, 897 residues long: DNA polymerase I (897 aa).

Positions 1 to 317 (MEQPVIKEGT…ILDNTPALDN (317 aa)) constitute a 5'-3' exonuclease domain. In terms of domain architecture, 3'-5' exonuclease spans 318-494 (APKKSRMIVL…RLCEYFEKGG (177 aa)). Residues 498–896 (DLLTLARDIE…FIAKRWNELK (399 aa)) form a polymerase region.

The protein belongs to the DNA polymerase type-A family. In terms of assembly, single-chain monomer with multiple functions.

The enzyme catalyses DNA(n) + a 2'-deoxyribonucleoside 5'-triphosphate = DNA(n+1) + diphosphate. Its function is as follows. In addition to polymerase activity, this DNA polymerase exhibits 3'-5' and 5'-3' exonuclease activity. The protein is DNA polymerase I (polA) of Helicobacter pylori (strain J99 / ATCC 700824) (Campylobacter pylori J99).